The primary structure comprises 244 residues: MSFTVYPALDIRNARVVRLLQGDYARETQYGDDVLPRAQAFADAGAQWMHLVDLDAAKAGGYTLAGTLGEIARATGLRVQTGGGVRSREDVARILDAGAARVVIGSLAVRNSEMVVGWLQEFGADRLTIALDTRQDADGIWQLPVHGWTEAADATLDQLAVRYARAGLQHLLCTDIARDGMLSGPNMALYGHLRALTPQLQVQVSGGARNLADVAAAKAAGCAGIVLGKALLEGHLNLDEALAC.

The active-site Proton acceptor is the Asp10. The Proton donor role is filled by Asp132.

It belongs to the HisA/HisF family.

Its subcellular location is the cytoplasm. It catalyses the reaction 1-(5-phospho-beta-D-ribosyl)-5-[(5-phospho-beta-D-ribosylamino)methylideneamino]imidazole-4-carboxamide = 5-[(5-phospho-1-deoxy-D-ribulos-1-ylimino)methylamino]-1-(5-phospho-beta-D-ribosyl)imidazole-4-carboxamide. The protein operates within amino-acid biosynthesis; L-histidine biosynthesis; L-histidine from 5-phospho-alpha-D-ribose 1-diphosphate: step 4/9. The polypeptide is 1-(5-phosphoribosyl)-5-[(5-phosphoribosylamino)methylideneamino] imidazole-4-carboxamide isomerase (Xanthomonas axonopodis pv. citri (strain 306)).